The following is a 334-amino-acid chain: GTP 3',8-cyclase (334 aa).

The 227-residue stretch at 13-239 (KFHRKFYYLR…KVRSHHDGPA (227 aa)) folds into the Radical SAM core domain. Arg22 contributes to the GTP binding site. Residues Cys29 and Cys33 each coordinate [4Fe-4S] cluster. Tyr35 contacts S-adenosyl-L-methionine. A [4Fe-4S] cluster-binding site is contributed by Cys36. Residue Arg73 participates in GTP binding. Residue Gly77 coordinates S-adenosyl-L-methionine. Thr104 provides a ligand contact to GTP. S-adenosyl-L-methionine is bound at residue Ser128. Position 165 (Lys165) interacts with GTP. Position 199 (Met199) interacts with S-adenosyl-L-methionine. 2 residues coordinate [4Fe-4S] cluster: Cys262 and Cys265. A GTP-binding site is contributed by 267–269 (RLR). Cys279 contacts [4Fe-4S] cluster.

It belongs to the radical SAM superfamily. MoaA family. Monomer and homodimer. The cofactor is [4Fe-4S] cluster.

It catalyses the reaction GTP + AH2 + S-adenosyl-L-methionine = (8S)-3',8-cyclo-7,8-dihydroguanosine 5'-triphosphate + 5'-deoxyadenosine + L-methionine + A + H(+). It participates in cofactor biosynthesis; molybdopterin biosynthesis. In terms of biological role, catalyzes the cyclization of GTP to (8S)-3',8-cyclo-7,8-dihydroguanosine 5'-triphosphate. In Vibrio parahaemolyticus serotype O3:K6 (strain RIMD 2210633), this protein is GTP 3',8-cyclase.